A 252-amino-acid polypeptide reads, in one-letter code: 3-dehydroquinate dehydratase (252 aa).

3-dehydroquinate is bound by residues S21, 46-48 (EWR), and R82. The Proton donor/acceptor role is filled by H143. Catalysis depends on K170, which acts as the Schiff-base intermediate with substrate. Positions 213, 232, and 236 each coordinate 3-dehydroquinate.

Belongs to the type-I 3-dehydroquinase family. Homodimer.

The enzyme catalyses 3-dehydroquinate = 3-dehydroshikimate + H2O. The protein operates within metabolic intermediate biosynthesis; chorismate biosynthesis; chorismate from D-erythrose 4-phosphate and phosphoenolpyruvate: step 3/7. Involved in the third step of the chorismate pathway, which leads to the biosynthesis of aromatic amino acids. Catalyzes the cis-dehydration of 3-dehydroquinate (DHQ) and introduces the first double bond of the aromatic ring to yield 3-dehydroshikimate. This chain is 3-dehydroquinate dehydratase, found in Salmonella paratyphi A (strain ATCC 9150 / SARB42).